The sequence spans 457 residues: Fibrinogen C domain-containing protein 1-B (457 aa).

The interval 1 to 21 is disordered; that stretch reads MGSDRWKNIRGTPQMEDSVQE. At 1–33 the chain is on the cytoplasmic side; sequence MGSDRWKNIRGTPQMEDSVQEKSQRKGCGYILC. The chain crosses the membrane as a helical; Signal-anchor for type II membrane protein span at residues 34-54; sequence TVLLSVAVLLAVTVTGAVLFM. Residues 55–457 lie on the Extracellular side of the membrane; sequence NQYHAPSTEP…MKIRPQREEN (403 aa). The Fibrinogen C-terminal domain occupies 231–454; sequence CANGSKPRDC…FTEMKIRPQR (224 aa). N-linked (GlcNAc...) asparagine glycosylation is present at asparagine 233. An intrachain disulfide couples cysteine 240 to cysteine 269. Asparagine 336 carries N-linked (GlcNAc...) asparagine glycosylation. Ca(2+) contacts are provided by aspartate 389 and aspartate 391. Cysteines 397 and 410 form a disulfide.

Homotetramer; disulfide-linked.

The protein resides in the membrane. In terms of biological role, acetyl group-binding receptor which shows a calcium-dependent binding to acetylated structures such as chitin, some N-acetylated carbohydrates, and amino acids. The sequence is that of Fibrinogen C domain-containing protein 1-B (fibcd1-b) from Xenopus laevis (African clawed frog).